The chain runs to 430 residues: UDP-N-acetylmuramoylalanine--D-glutamate ligase (430 aa).

Residue 105–111 (GSNGKTT) participates in ATP binding.

This sequence belongs to the MurCDEF family.

The protein localises to the cytoplasm. It carries out the reaction UDP-N-acetyl-alpha-D-muramoyl-L-alanine + D-glutamate + ATP = UDP-N-acetyl-alpha-D-muramoyl-L-alanyl-D-glutamate + ADP + phosphate + H(+). The protein operates within cell wall biogenesis; peptidoglycan biosynthesis. Functionally, cell wall formation. Catalyzes the addition of glutamate to the nucleotide precursor UDP-N-acetylmuramoyl-L-alanine (UMA). This is UDP-N-acetylmuramoylalanine--D-glutamate ligase from Pseudothermotoga lettingae (strain ATCC BAA-301 / DSM 14385 / NBRC 107922 / TMO) (Thermotoga lettingae).